A 135-amino-acid polypeptide reads, in one-letter code: ATP synthase epsilon chain (135 aa).

Basic and acidic residues predominate over residues 90 to 103 (DVRRAESAKERAES). Residues 90-115 (DVRRAESAKERAESHLNNNDEDTDIN) are disordered.

The protein belongs to the ATPase epsilon chain family. In terms of assembly, F-type ATPases have 2 components, CF(1) - the catalytic core - and CF(0) - the membrane proton channel. CF(1) has five subunits: alpha(3), beta(3), gamma(1), delta(1), epsilon(1). CF(0) has three main subunits: a, b and c.

It localises to the cell membrane. Functionally, produces ATP from ADP in the presence of a proton gradient across the membrane. The polypeptide is ATP synthase epsilon chain (Staphylococcus carnosus (strain TM300)).